Here is a 66-residue protein sequence, read N- to C-terminus: Large ribosomal subunit protein bL35 (66 aa).

The protein belongs to the bacterial ribosomal protein bL35 family.

This is Large ribosomal subunit protein bL35 from Caulobacter sp. (strain K31).